A 1257-amino-acid polypeptide reads, in one-letter code: Liprin-alpha-2 (1257 aa).

Disordered regions lie at residues M1 to S29, A231 to D265, and E438 to K463. Low complexity predominate over residues S16–D26. Coiled-coil stretches lie at residues S29–M154, K185–E541, and H643–L695. Residue S236 is modified to Phosphoserine. T237 carries the phosphothreonine modification. Residues E238–L256 show a composition bias toward basic and acidic residues. Position 239 is a phosphoserine (S239). S687 and S689 each carry phosphoserine. Composition is skewed to low complexity over residues T709–P725 and S798–S813. 2 disordered regions span residues T709–R738 and S790–I834. Phosphoserine is present on residues S817 and S820. 3 SAM domains span residues W898–L964, N1020–L1084, and W1108–L1177. A coiled-coil region spans residues L1081 to V1107.

It belongs to the liprin family. Liprin-alpha subfamily. Forms homodimers and heterodimers with liprins-alpha and liprins-beta. Interacts with the second PTPase domain of PTPRD, PTPRF and PTPRS. Interacts with KIF1A; the interaction decreases in presence of calcium. In terms of tissue distribution, expressed only in brain.

It is found in the cytoplasm. The protein localises to the cell surface. Its subcellular location is the cell projection. The protein resides in the dendritic spine. Its function is as follows. Alters PTPRF cellular localization and induces PTPRF clustering. May regulate the disassembly of focal adhesions. May localize receptor-like tyrosine phosphatases type 2A at specific sites on the plasma membrane, possibly regulating their interaction with the extracellular environment and their association with substrates. In neuronal cells, is a scaffolding protein in the dendritic spines which acts as immobile postsynaptic post able to recruit KIF1A-driven dense core vesicles to dendritic spines. In Homo sapiens (Human), this protein is Liprin-alpha-2 (PPFIA2).